A 244-amino-acid polypeptide reads, in one-letter code: 2-C-methyl-D-erythritol 4-phosphate cytidylyltransferase (244 aa).

Belongs to the IspD/TarI cytidylyltransferase family. IspD subfamily.

It carries out the reaction 2-C-methyl-D-erythritol 4-phosphate + CTP + H(+) = 4-CDP-2-C-methyl-D-erythritol + diphosphate. It functions in the pathway isoprenoid biosynthesis; isopentenyl diphosphate biosynthesis via DXP pathway; isopentenyl diphosphate from 1-deoxy-D-xylulose 5-phosphate: step 2/6. Catalyzes the formation of 4-diphosphocytidyl-2-C-methyl-D-erythritol from CTP and 2-C-methyl-D-erythritol 4-phosphate (MEP). In Corynebacterium diphtheriae (strain ATCC 700971 / NCTC 13129 / Biotype gravis), this protein is 2-C-methyl-D-erythritol 4-phosphate cytidylyltransferase.